The primary structure comprises 110 residues: Inner membrane protein H108R (110 aa).

Residues 10 to 32 (LIVIITILITTRELSTTMLIVSL) form a helical membrane-spanning segment.

Belongs to the asfivirus H108R family.

It localises to the virion membrane. The protein is Inner membrane protein H108R of African swine fever virus (isolate Pig/Kenya/KEN-50/1950) (ASFV).